The following is a 287-amino-acid chain: Xyloglucan endotransglucosylase protein 1 (287 aa).

The signal sequence occupies residues 1 to 28; sequence MAFMSFINGFSTLFLVALLASSMMAAKG. In terms of domain architecture, GH16 spans 29–219; that stretch reads GNFYQDFDVT…WTKAPFTAYY (191 aa). Residue glutamate 105 is the Nucleophile of the active site. Glutamate 109 functions as the Proton donor in the catalytic mechanism. Glutamate 109 lines the xyloglucan pocket. A glycan (N-linked (GlcNAc...) asparagine) is linked at asparagine 113. Xyloglucan is bound by residues 122-124, 132-134, 198-199, and glycine 203; these read HTN, NRE, and DW. Cystine bridges form between cysteine 227–cysteine 231 and cysteine 266–cysteine 280. Arginine 271 contributes to the xyloglucan binding site.

The protein belongs to the glycosyl hydrolase 16 family. XTH group 2 subfamily. Post-translationally, contains at least one intrachain disulfide bond essential for its enzymatic activity. In terms of tissue distribution, expressed in fruit pulp. Expressed in leaves, flowers, calyces, stems and fruits. Highest expression in leaves and lowest in fruits.

It is found in the secreted. The protein localises to the cell wall. The protein resides in the extracellular space. Its subcellular location is the apoplast. It catalyses the reaction breaks a beta-(1-&gt;4) bond in the backbone of a xyloglucan and transfers the xyloglucanyl segment on to O-4 of the non-reducing terminal glucose residue of an acceptor, which can be a xyloglucan or an oligosaccharide of xyloglucan.. In terms of biological role, catalyzes xyloglucan endotransglycosylation (XET). Cleaves and religates xyloglucan polymers. Does not catalyze xyloglucan endohydrolysis (XEH). Overexpression in Arabidopsis transgenic plants results in elevated tolerance to abiotic stress, such as salt, ABA (abscisic acid) and drought stresses, and in the production of wider leaves. Overexpression in transgenic tomato plants slows down fruit ripening and softening, and the plants produce larger fruits. Both transgenic plants have larger and more irregular cells. Moreover, the fruits of the transgenic tomato have higher density of cell wall and intercellular spaces. May provide cells with more strength and thickness to maintain structural integrity. Probably involved in cell wall assembly and synthesis in fast growing tissues and in the maintenance of firmness in mature fruits. This is Xyloglucan endotransglucosylase protein 1 from Diospyros kaki (Kaki persimmon).